The primary structure comprises 293 residues: MRVVPLGFESLGVRSMATLIETPDVTVLVDPGVSIPPKRYNLPPSEEEWEALEEVRESIQRAADSADVVTISHYHYDHHTPFTDRKYEACDLETAKELYRDKLILMKHPTENINRSQAGRARALIEGLDELGVDYEFADGKRFEFGETVLEFSQPLPHGPEGTRLGYVLGLRITHRDHVIVHASDVQGPVYGPALEWILERDPDLVLISGPPTYLLGFRFSSDNLEKAVKNLRKLASRSGQIILDHHLLRDKNYRDRLSEVYEESDNVASAAEVLGKEERLLEAYRDELSGEE.

The protein belongs to the UPF0282 family.

This chain is UPF0282 protein MK0213, found in Methanopyrus kandleri (strain AV19 / DSM 6324 / JCM 9639 / NBRC 100938).